The sequence spans 138 residues: Class I hydrophobin 1 (138 aa).

The signal sequence occupies residues 1–19 (MRFSAATVSALAMALTVAA). 4 disulfides stabilise this stretch: C45–C113, C53–C107, C54–C91, and C114–C131.

It belongs to the fungal hydrophobin family. Interacts with the lipid droplet coating protein Cap20.

Its subcellular location is the secreted. It localises to the lipid droplet. Functionally, aerial growth, conidiation, and dispersal of filamentous fungi in the environment rely upon a capability of their secreting small amphipathic proteins called hydrophobins (HPBs) with low sequence identity. Class I can self-assemble into an outermost layer of rodlet bundles on aerial cell surfaces, conferring cellular hydrophobicity that supports fungal growth, development and dispersal; whereas Class II form highly ordered films at water-air interfaces through intermolecular interactions but contribute nothing to the rodlet structure. Hydr1 is a class I hydrophobin involved in spore germination, appressorium formation, but not in the formation of the rodlet layer of conidia. Responsible for the full virulence on rubber tree leaves. This chain is Class I hydrophobin 1, found in Colletotrichum siamense (Anthracnose fungus).